The following is a 255-amino-acid chain: MKAYAKANIFLKLTGFDSRKYHLLESRFILLKDLFDELELVDKESDSKKEFEIISNFKCENNIIQKAYLLLSKRYNNELKELFSKKSLKLTKNIPVCAGLGGGSSDCASFLLLMNETLNLKLNLQELINLSIQLGSDIAFFLSGFHSANVSGCGEIIEEFEDDIPNLKWTFPQISCQTKAVYDEFDRGIFDFQKNNNQAQIYKKLSTKELLQNFKNKELNDLFTPCATLYPKMKSYLQEDFFLSGSGSSVFKVDR.

The active site involves Lys-6. Residue 95–105 (PVCAGLGGGSS) coordinates ATP. The active site involves Asp-137.

This sequence belongs to the GHMP kinase family. IspE subfamily.

It catalyses the reaction 4-CDP-2-C-methyl-D-erythritol + ATP = 4-CDP-2-C-methyl-D-erythritol 2-phosphate + ADP + H(+). Its pathway is isoprenoid biosynthesis; isopentenyl diphosphate biosynthesis via DXP pathway; isopentenyl diphosphate from 1-deoxy-D-xylulose 5-phosphate: step 3/6. Catalyzes the phosphorylation of the position 2 hydroxy group of 4-diphosphocytidyl-2C-methyl-D-erythritol. This is 4-diphosphocytidyl-2-C-methyl-D-erythritol kinase from Campylobacter jejuni subsp. jejuni serotype O:6 (strain 81116 / NCTC 11828).